The primary structure comprises 374 residues: Chaperone protein DnaJ (374 aa).

The J domain maps to 5–70 (DYYEVLGVER…SKRAAYDQYG (66 aa)). The CR-type zinc finger occupies 133-211 (GTTVNIRVPT…CHGEGRVEEY (79 aa)). The Zn(2+) site is built by Cys146, Cys149, Cys163, Cys166, Cys185, Cys188, Cys199, and Cys202. CXXCXGXG motif repeat units lie at residues 146–153 (CKPCDGSG), 163–170 (CPTCGGIG), 185–192 (CPRCHGQG), and 199–206 (CDSCHGEG).

The protein belongs to the DnaJ family. In terms of assembly, homodimer. It depends on Zn(2+) as a cofactor.

The protein resides in the cytoplasm. Participates actively in the response to hyperosmotic and heat shock by preventing the aggregation of stress-denatured proteins and by disaggregating proteins, also in an autonomous, DnaK-independent fashion. Unfolded proteins bind initially to DnaJ; upon interaction with the DnaJ-bound protein, DnaK hydrolyzes its bound ATP, resulting in the formation of a stable complex. GrpE releases ADP from DnaK; ATP binding to DnaK triggers the release of the substrate protein, thus completing the reaction cycle. Several rounds of ATP-dependent interactions between DnaJ, DnaK and GrpE are required for fully efficient folding. Also involved, together with DnaK and GrpE, in the DNA replication of plasmids through activation of initiation proteins. The chain is Chaperone protein DnaJ from Pseudomonas fluorescens (strain ATCC BAA-477 / NRRL B-23932 / Pf-5).